Reading from the N-terminus, the 677-residue chain is MIQRAEAVLSVLGELQEATECVGLDALTKVAVEVEQVLAPFPLPTAPCSEISSWQGIDAVAHRLYPGDAPTGLLPLVCKGEGNLLFDAASMLLVGSTSLSLELQVRAVVEMLIWKRYYLCGMIDSKVMLQAARFSLCAEESQDMLNLPIQVLEAIFDADVKASCFHGSFANMWHVYALASVLQCNIYSVYPMYNLKIRPYFNRLIRPRIWSKDTEPLTLHIMWSGDLEAGSVFKPHKFVALIHASDLKIGSPNSEQRMPLVKSLELQNQDTQLSYSNLKNKFNITKSTFYRWKRQSIEYHKKSVARYEAKHFFLTSYKQGKLIPLSQFKELFPEIPRSTYYAWKQELVSCCSLSGGSTGELSPGDSTEQDYWSSPEVKKTPGQGSFANMLAFKYEKLEGERNQNVTLMQEAKKSLQDCIVANTSFPYRIFKRKFPGISRSTYYNWRREAMLFIPFKEHSGSSEEGSDADKSQSPRSQMSPSKFDRQKLSPRVRISRRKHRSLRLAYHHRKMLREEAKMHIRRSKMSFIKFKLKFPTVSSSFYWLWRVSLNRKPEKPAVMSNSEESKSLAISPDVFQKIKTQGMFSFDGNIDCLNGQTEFTMPEYSPPDQSTNDHMFVMDVVALANFKAKAKLFLQQRFEEKAFPTFKEFRSYFPLTPRSTYYMWKRALHHGVPLIHA.

2 disordered regions span residues 356-376 (GSTGELSPGDSTEQDYWSSPE) and 458-490 (HSGSSEEGSDADKSQSPRSQMSPSKFDRQKLSP). Residues 458-472 (HSGSSEEGSDADKSQ) are compositionally biased toward basic and acidic residues.

Belongs to the vertnin family.

The protein resides in the nucleus. Functionally, functions as a transcriptional repressor that modulates bmp2b expression during dorsoventral patterning. The chain is Vertnin (vrtn) from Danio rerio (Zebrafish).